A 391-amino-acid polypeptide reads, in one-letter code: Succinate--CoA ligase [ADP-forming] subunit beta (391 aa).

The 239-residue stretch at 9–247 (KDILAKYGVA…IAEEDPLEVE (239 aa)) folds into the ATP-grasp domain. Residues Lys-49, 56–58 (GRG), Glu-102, Ala-105, and Glu-110 each bind ATP. Positions 202 and 216 each coordinate Mg(2+). Residues Asn-267 and 324-326 (GIL) contribute to the substrate site.

It belongs to the succinate/malate CoA ligase beta subunit family. Heterotetramer of two alpha and two beta subunits. It depends on Mg(2+) as a cofactor.

It catalyses the reaction succinate + ATP + CoA = succinyl-CoA + ADP + phosphate. It carries out the reaction GTP + succinate + CoA = succinyl-CoA + GDP + phosphate. Its pathway is carbohydrate metabolism; tricarboxylic acid cycle; succinate from succinyl-CoA (ligase route): step 1/1. Its function is as follows. Succinyl-CoA synthetase functions in the citric acid cycle (TCA), coupling the hydrolysis of succinyl-CoA to the synthesis of either ATP or GTP and thus represents the only step of substrate-level phosphorylation in the TCA. The beta subunit provides nucleotide specificity of the enzyme and binds the substrate succinate, while the binding sites for coenzyme A and phosphate are found in the alpha subunit. The polypeptide is Succinate--CoA ligase [ADP-forming] subunit beta (Acidobacterium capsulatum (strain ATCC 51196 / DSM 11244 / BCRC 80197 / JCM 7670 / NBRC 15755 / NCIMB 13165 / 161)).